Consider the following 78-residue polypeptide: Calcium/calmodulin-dependent protein kinase II inhibitor 1 (78 aa).

A CAMK2 inhibitory domain region spans residues 41–68 (NKRPPKLGQIGRSKRVVIEDDRIDDVLK).

The protein belongs to the CAMK2N family. Interacts with CAMK2B; the presence of Ca(2+)/calmodulin increases the interaction but is not essential. Interacts with CAMK2A; this interaction requires CAMK2A activation by Ca(2+).

The protein resides in the synapse. The protein localises to the cell projection. Its subcellular location is the dendrite. It localises to the postsynaptic density. Its function is as follows. Potent and specific inhibitor of CaM-kinase II (CAMK2). Plays a role in the maintenance of long-term retrieval-induced memory in response to contextual fear. Modulates blood pressure and vascular reactivity via regulation of CAMK2 activity in addition to regulation of left ventricular mass. Mediates the NLRP3 inflammasome in cardiomyocytes via acting as an inhibitor of the MAPK14/p38 and MAPK8/JNK pathways, thereby regulating ventricular remodeling and cardiac rhythm post-myocardial infarction. Negatively effects insulin sensitivity and promotes lipid formation in adipose tissues independent of CAMK2 signaling. The chain is Calcium/calmodulin-dependent protein kinase II inhibitor 1 (CAMK2N1) from Bos taurus (Bovine).